The primary structure comprises 1938 residues: Myosin-4 (1938 aa).

One can recognise a Myosin N-terminal SH3-like domain in the interval 33 to 82 (DAKSSVFVADPKESFVKATVQSREGGKVTAKTEAGATVTVKEDQVFPMNP). A Phosphoserine modification is found at Ser36. Phosphothreonine occurs at positions 64 and 69. Residues 86-781 (DKIEDMAMMT…LLGLLEEMRD (696 aa)) form the Myosin motor domain. 179–186 (GESGAGKT) is an ATP binding site. Tyr389 is subject to Phosphotyrosine. Ser392 is modified (phosphoserine). Phosphothreonine is present on Thr419. Residue Tyr424 is modified to Phosphotyrosine. The segment at 658 to 680 (LNKLMTNLRSTHPHFVRCIIPNE) is actin-binding. His756 carries the pros-methylhistidine modification. An actin-binding region spans residues 760–774 (KFGHTKVFFKAGLLG). Positions 784 to 813 (LAQLITRTQAMCRGFLARVEYKKMVERRES) constitute an IQ domain. Positions 845 to 1926 (SAETEKEMAN…ESQVNKLRVK (1082 aa)) form a coiled coil. A phosphoserine mark is found at Ser1091, Ser1095, Ser1161, and Ser1236. Thr1240 is subject to Phosphothreonine. Ser1242 is subject to Phosphoserine. At Thr1254 the chain carries Phosphothreonine. Ser1260 is subject to Phosphoserine. Thr1264 is subject to Phosphothreonine. Ser1277 bears the Phosphoserine mark. Thr1285 bears the Phosphothreonine mark. A phosphoserine mark is found at Ser1287, Ser1291, Ser1302, and Ser1305. A Phosphotyrosine modification is found at Tyr1463. Thr1466 carries the phosphothreonine modification. Phosphoserine is present on Ser1473. Tyr1491 bears the Phosphotyrosine mark. Phosphoserine is present on Ser1494. Thr1500 is subject to Phosphothreonine. Ser1513 carries the phosphoserine modification. Thr1516 is subject to Phosphothreonine. 7 positions are modified to phosphoserine: Ser1541, Ser1553, Ser1573, Ser1599, Ser1602, Ser1713, and Ser1725. Residues Thr1729 and Thr1735 each carry the phosphothreonine modification. At Ser1738 the chain carries Phosphoserine.

It belongs to the TRAFAC class myosin-kinesin ATPase superfamily. Myosin family. In terms of assembly, muscle myosin is a hexameric protein that consists of 2 heavy chain subunits (MHC), 2 alkali light chain subunits (MLC) and 2 regulatory light chain subunits (MLC-2).

The protein localises to the cytoplasm. It localises to the myofibril. Muscle contraction. In Oryctolagus cuniculus (Rabbit), this protein is Myosin-4 (MYH4).